A 500-amino-acid chain; its full sequence is Lysine--tRNA ligase (500 aa).

Residues Glu-411 and Glu-418 each coordinate Mg(2+).

This sequence belongs to the class-II aminoacyl-tRNA synthetase family. As to quaternary structure, homodimer. Requires Mg(2+) as cofactor.

The protein localises to the cytoplasm. It catalyses the reaction tRNA(Lys) + L-lysine + ATP = L-lysyl-tRNA(Lys) + AMP + diphosphate. This is Lysine--tRNA ligase from Azoarcus sp. (strain BH72).